A 101-amino-acid polypeptide reads, in one-letter code: Small ribosomal subunit protein uS14 (101 aa).

This sequence belongs to the universal ribosomal protein uS14 family. As to quaternary structure, part of the 30S ribosomal subunit. Contacts proteins S3 and S10.

Functionally, binds 16S rRNA, required for the assembly of 30S particles and may also be responsible for determining the conformation of the 16S rRNA at the A site. The polypeptide is Small ribosomal subunit protein uS14 (Rhizobium johnstonii (strain DSM 114642 / LMG 32736 / 3841) (Rhizobium leguminosarum bv. viciae)).